The sequence spans 83 residues: Translational regulator CsrA (83 aa).

It belongs to the CsrA/RsmA family. In terms of assembly, homodimer; the beta-strands of each monomer intercalate to form a hydrophobic core, while the alpha-helices form wings that extend away from the core.

It localises to the cytoplasm. A translational regulator that binds mRNA to regulate translation initiation and/or mRNA stability. Usually binds in the 5'-UTR at or near the Shine-Dalgarno sequence preventing ribosome-binding, thus repressing translation. Its main target seems to be the major flagellin gene, while its function is anatagonized by FliW. This chain is Translational regulator CsrA, found in Thermotoga petrophila (strain ATCC BAA-488 / DSM 13995 / JCM 10881 / RKU-1).